Consider the following 222-residue polypeptide: PKHD-type hydroxylase cce_3668 (222 aa).

Residues 78-175 (HIHSLRFSRY…RLVVVGWVHS (98 aa)) enclose the Fe2OG dioxygenase domain. Residues His-96, Asp-98, and His-156 each contribute to the Fe cation site. Arg-166 contacts 2-oxoglutarate.

Fe(2+) serves as cofactor. L-ascorbate is required as a cofactor.

The protein is PKHD-type hydroxylase cce_3668 of Crocosphaera subtropica (strain ATCC 51142 / BH68) (Cyanothece sp. (strain ATCC 51142)).